The chain runs to 96 residues: Putative pterin-4-alpha-carbinolamine dehydratase (96 aa).

The protein belongs to the pterin-4-alpha-carbinolamine dehydratase family.

The catalysed reaction is (4aS,6R)-4a-hydroxy-L-erythro-5,6,7,8-tetrahydrobiopterin = (6R)-L-erythro-6,7-dihydrobiopterin + H2O. The sequence is that of Putative pterin-4-alpha-carbinolamine dehydratase from Brucella anthropi (strain ATCC 49188 / DSM 6882 / CCUG 24695 / JCM 21032 / LMG 3331 / NBRC 15819 / NCTC 12168 / Alc 37) (Ochrobactrum anthropi).